The sequence spans 495 residues: Amidophosphoribosyltransferase (495 aa).

Positions 1 to 22 (MFPPSSDLTELNDGQPLSGHHA) are disordered. The propeptide occupies 1 to 28 (MFPPSSDLTELNDGQPLSGHHADKPEEA). The active-site Nucleophile is the Cys-29. Residues 29 to 254 (CGVFGIYAPE…AGELVHITES (226 aa)) form the Glutamine amidotransferase type-2 domain. Position 270 (Cys-270) interacts with [4Fe-4S] cluster. Residues Ser-317, Asp-379, and Asp-380 each contribute to the Mg(2+) site. [4Fe-4S] cluster-binding residues include Cys-416, Cys-467, and Cys-470.

It in the C-terminal section; belongs to the purine/pyrimidine phosphoribosyltransferase family. It depends on Mg(2+) as a cofactor. The cofactor is [4Fe-4S] cluster.

The enzyme catalyses 5-phospho-beta-D-ribosylamine + L-glutamate + diphosphate = 5-phospho-alpha-D-ribose 1-diphosphate + L-glutamine + H2O. It functions in the pathway purine metabolism; IMP biosynthesis via de novo pathway; N(1)-(5-phospho-D-ribosyl)glycinamide from 5-phospho-alpha-D-ribose 1-diphosphate: step 1/2. In terms of biological role, catalyzes the formation of phosphoribosylamine from phosphoribosylpyrophosphate (PRPP) and glutamine. The polypeptide is Amidophosphoribosyltransferase (Synechocystis sp. (strain ATCC 27184 / PCC 6803 / Kazusa)).